We begin with the raw amino-acid sequence, 432 residues long: Argininosuccinate lyase (432 aa).

This sequence belongs to the lyase 1 family. Argininosuccinate lyase subfamily.

It is found in the cytoplasm. The catalysed reaction is 2-(N(omega)-L-arginino)succinate = fumarate + L-arginine. It functions in the pathway amino-acid biosynthesis; L-arginine biosynthesis; L-arginine from L-ornithine and carbamoyl phosphate: step 3/3. The sequence is that of Argininosuccinate lyase from Xanthomonas euvesicatoria pv. vesicatoria (strain 85-10) (Xanthomonas campestris pv. vesicatoria).